Reading from the N-terminus, the 503-residue chain is ATP synthase subunit beta (503 aa).

Position 157–164 (157–164) interacts with ATP; the sequence is GGAGVGKT.

Belongs to the ATPase alpha/beta chains family. In terms of assembly, F-type ATPases have 2 components, CF(1) - the catalytic core - and CF(0) - the membrane proton channel. CF(1) has five subunits: alpha(3), beta(3), gamma(1), delta(1), epsilon(1). CF(0) has three main subunits: a(1), b(2) and c(9-12). The alpha and beta chains form an alternating ring which encloses part of the gamma chain. CF(1) is attached to CF(0) by a central stalk formed by the gamma and epsilon chains, while a peripheral stalk is formed by the delta and b chains.

It localises to the cell membrane. It catalyses the reaction ATP + H2O + 4 H(+)(in) = ADP + phosphate + 5 H(+)(out). Produces ATP from ADP in the presence of a proton gradient across the membrane. The catalytic sites are hosted primarily by the beta subunits. This Christiangramia forsetii (strain DSM 17595 / CGMCC 1.15422 / KT0803) (Gramella forsetii) protein is ATP synthase subunit beta.